The chain runs to 58 residues: MATIKVKQVKSRIKCPKDQKRTLDALGLRKMNQIVEHEANPAILGMVEKVKHLVSVEK.

The protein belongs to the universal ribosomal protein uL30 family. In terms of assembly, part of the 50S ribosomal subunit.

The sequence is that of Large ribosomal subunit protein uL30 from Parabacteroides distasonis (strain ATCC 8503 / DSM 20701 / CIP 104284 / JCM 5825 / NCTC 11152).